Reading from the N-terminus, the 172-residue chain is Adenine phosphoribosyltransferase (172 aa).

Belongs to the purine/pyrimidine phosphoribosyltransferase family. In terms of assembly, homodimer.

It localises to the cytoplasm. It catalyses the reaction AMP + diphosphate = 5-phospho-alpha-D-ribose 1-diphosphate + adenine. It participates in purine metabolism; AMP biosynthesis via salvage pathway; AMP from adenine: step 1/1. Catalyzes a salvage reaction resulting in the formation of AMP, that is energically less costly than de novo synthesis. The polypeptide is Adenine phosphoribosyltransferase (Synechococcus sp. (strain CC9605)).